The sequence spans 516 residues: L-amino-acid oxidase (516 aa).

A signal peptide spans 1–18; that stretch reads MNVFFMFSLLFLAALGSC. Cysteine 28 and cysteine 189 are disulfide-bonded. Residues 61–62, 81–82, arginine 89, and 103–106 each bind FAD; these read MA, EA, and GPMR. Substrate is bound by residues arginine 106 and histidine 239. Valine 279 provides a ligand contact to FAD. Cysteine 349 and cysteine 430 are disulfide-bonded. The N-linked (GlcNAc...) asparagine glycan is linked to asparagine 379. Position 390 (tyrosine 390) interacts with substrate. FAD-binding positions include glutamate 475 and 482–487; that span reads GWIDST. 482 to 483 contributes to the substrate binding site; the sequence is GW.

It belongs to the flavin monoamine oxidase family. FIG1 subfamily. Homodimer; non-covalently linked. FAD is required as a cofactor. Expressed by the venom gland.

It localises to the secreted. The enzyme catalyses an L-alpha-amino acid + O2 + H2O = a 2-oxocarboxylate + H2O2 + NH4(+). In terms of biological role, catalyzes an oxidative deamination of predominantly hydrophobic and aromatic L-amino acids, thus producing hydrogen peroxide that may contribute to the diverse toxic effects of this enzyme. Exhibits diverse biological activities, such as hemolysis, edema, hemorrhage, apoptosis, antibacterial and antiparasitic activities, as well as regulation of platelet aggregation. Effects of snake L-amino oxidases on platelets are controversial, since they either induce aggregation or inhibit agonist-induced aggregation. These different effects are probably due to different experimental conditions. The sequence is that of L-amino-acid oxidase from Crotalus adamanteus (Eastern diamondback rattlesnake).